The sequence spans 115 residues: Large ribosomal subunit protein bL19 (115 aa).

Belongs to the bacterial ribosomal protein bL19 family.

This protein is located at the 30S-50S ribosomal subunit interface and may play a role in the structure and function of the aminoacyl-tRNA binding site. The protein is Large ribosomal subunit protein bL19 of Lactobacillus acidophilus (strain ATCC 700396 / NCK56 / N2 / NCFM).